Reading from the N-terminus, the 205-residue chain is Adenylyl-sulfate kinase (205 aa).

31-38 (GLSGAGKS) is a binding site for ATP. Ser-105 functions as the Phosphoserine intermediate in the catalytic mechanism.

It belongs to the APS kinase family.

The enzyme catalyses adenosine 5'-phosphosulfate + ATP = 3'-phosphoadenylyl sulfate + ADP + H(+). The protein operates within sulfur metabolism; hydrogen sulfide biosynthesis; sulfite from sulfate: step 2/3. In terms of biological role, catalyzes the synthesis of activated sulfate. The sequence is that of Adenylyl-sulfate kinase from Shewanella baltica (strain OS195).